A 543-amino-acid chain; its full sequence is Sensor histidine kinase DcuS (543 aa).

Residues 1–20 (MRHSLPYRMLRKRPMKLSTT) lie on the Cytoplasmic side of the membrane. Residues 21–41 (VILMVSAVLFSVLLVVHLIYF) traverse the membrane as a helical segment. The Periplasmic segment spans residues 42-181 (SQISDMTRDG…VTQQINDSRW (140 aa)). (R)-malate-binding positions include 107–110 (RYSH), lysine 121, 140–142 (GFL), and arginine 147. The helical transmembrane segment at 182–202 (SIIWSVLFGMLVGLIGTCILV) threads the bilayer. Residues 203-543 (NVLKKILFGL…IPWDGERSNR (341 aa)) are Cytoplasmic-facing. One can recognise a PAS domain in the interval 212–323 (LEPYEISTLF…IIGAISTFRD (112 aa)). A Histidine kinase domain is found at 346-538 (ERSHEFMNKL…QFFVQIPWDG (193 aa)). Histidine 349 carries the post-translational modification Phosphohistidine; by autocatalysis.

In terms of assembly, homodimer. Post-translationally, autophosphorylated. The phosphoryl group is rapidly transferred to DcuR.

Its subcellular location is the cell inner membrane. It carries out the reaction ATP + protein L-histidine = ADP + protein N-phospho-L-histidine.. Member of the two-component regulatory system DcuR/DcuS. Involved in the C4-dicarboxylate-stimulated regulation of the genes encoding the anaerobic fumarate respiratory system (frdABCD; nuoAN; dcuB; sdhCDAB; etc.). Weakly regulates the aerobic C4-dicarboxylate transporter dctA. Activates DcuR by phosphorylation. The protein is Sensor histidine kinase DcuS (dcuS) of Escherichia coli O6:H1 (strain CFT073 / ATCC 700928 / UPEC).